Reading from the N-terminus, the 156-residue chain is ATP synthase subunit b (156 aa).

Residues 7–29 traverse the membrane as a helical segment; that stretch reads LLGQAISFALFVWFCIKFVWPPL.

It belongs to the ATPase B chain family. In terms of assembly, F-type ATPases have 2 components, F(1) - the catalytic core - and F(0) - the membrane proton channel. F(1) has five subunits: alpha(3), beta(3), gamma(1), delta(1), epsilon(1). F(0) has three main subunits: a(1), b(2) and c(10-14). The alpha and beta chains form an alternating ring which encloses part of the gamma chain. F(1) is attached to F(0) by a central stalk formed by the gamma and epsilon chains, while a peripheral stalk is formed by the delta and b chains.

The protein localises to the cell inner membrane. F(1)F(0) ATP synthase produces ATP from ADP in the presence of a proton or sodium gradient. F-type ATPases consist of two structural domains, F(1) containing the extramembraneous catalytic core and F(0) containing the membrane proton channel, linked together by a central stalk and a peripheral stalk. During catalysis, ATP synthesis in the catalytic domain of F(1) is coupled via a rotary mechanism of the central stalk subunits to proton translocation. In terms of biological role, component of the F(0) channel, it forms part of the peripheral stalk, linking F(1) to F(0). This Shewanella sp. (strain W3-18-1) protein is ATP synthase subunit b.